The primary structure comprises 190 residues: Flavodoxin-like domain-containing protein BilS (190 aa).

Its pathway is porphyrin-containing compound metabolism; protoheme degradation. Functionally, together with BilR, catalyzes reduction of mesobilirubin and/or bilirubin to urobilinogen, a key step during heme degradation. BilS is probably involved in electron transfer for the bilirubin reductase BilR. This chain is Flavodoxin-like domain-containing protein BilS, found in Clostridium symbiosum (strain WAL-14163).